A 543-amino-acid polypeptide reads, in one-letter code: Probable protein kinase UbiB (543 aa).

The 379-residue stretch at Asp123–Leu501 folds into the Protein kinase domain. ATP contacts are provided by residues Leu129–Val137 and Lys152. Asp287 (proton acceptor) is an active-site residue. 2 helical membrane-spanning segments follow: residues Ser498–Gly518 and Asp519–Trp539.

The protein belongs to the ABC1 family. UbiB subfamily.

Its subcellular location is the cell inner membrane. Its pathway is cofactor biosynthesis; ubiquinone biosynthesis [regulation]. Its function is as follows. Is probably a protein kinase regulator of UbiI activity which is involved in aerobic coenzyme Q (ubiquinone) biosynthesis. This chain is Probable protein kinase UbiB, found in Serratia proteamaculans (strain 568).